Reading from the N-terminus, the 1163-residue chain is Integrin alpha-X (1163 aa).

The signal sequence occupies residues 1 to 19 (MTRTRAALLLFTALATSLG). Topologically, residues 20 to 1107 (FNLDTEELTA…EKYKVHNPTP (1088 aa)) are extracellular. FG-GAP repeat units lie at residues 23-78 (DTEE…ACEP) and 79-138 (IGLQ…TQRL). Asparagine 61 is a glycosylation site (N-linked (GlcNAc...) asparagine). Cysteine 69 and cysteine 76 are joined by a disulfide. Residue asparagine 89 is glycosylated (N-linked (GlcNAc...) asparagine). 2 disulfides stabilise this stretch: cysteine 108–cysteine 126 and cysteine 116–cysteine 145. Mg(2+) is bound by residues aspartate 157, serine 159, serine 161, and aspartate 259. Positions 165 to 339 (RNFATMMNFV…KEKIFAIEGT (175 aa)) constitute a VWFA domain. 5 FG-GAP repeats span residues 340-391 (ETTS…PTFI), 392-443 (NMSQ…SRQW), 444-504 (RMKA…WRRW), 507-565 (DAVL…PSIS), and 570-630 (QRIA…FIPA). Asparagine 392 carries an N-linked (GlcNAc...) asparagine glycan. Ca(2+) is bound by residues aspartate 466, aspartate 468, aspartate 470, and aspartate 474. A disulfide bridge connects residues cysteine 495 and cysteine 506. Ca(2+)-binding residues include aspartate 530, asparagine 532, aspartate 534, aspartate 538, aspartate 593, aspartate 597, and aspartate 601. Disulfide bonds link cysteine 639-cysteine 722 and cysteine 655-cysteine 712. Residues asparagine 697 and asparagine 735 are each glycosylated (N-linked (GlcNAc...) asparagine). 2 disulfides stabilise this stretch: cysteine 771–cysteine 777 and cysteine 848–cysteine 863. Asparagine 899 and asparagine 939 each carry an N-linked (GlcNAc...) asparagine glycan. Disulfide bonds link cysteine 998-cysteine 1022 and cysteine 1027-cysteine 1032. Asparagine 1050 carries N-linked (GlcNAc...) asparagine glycosylation. The helical transmembrane segment at 1108–1128 (LIVGSSIGGLLLLALITAVLY) threads the bilayer. Residues 1129 to 1163 (KVGFFKRQYKEMMEEANGQIAPENGTQTPSPPSEK) are Cytoplasmic-facing. Positions 1131-1135 (GFFKR) match the GFFKR motif motif.

Belongs to the integrin alpha chain family. In terms of assembly, heterodimer of an alpha and a beta subunit. Alpha-X associates with beta-2. In terms of tissue distribution, predominantly expressed in monocytes and granulocytes.

It localises to the membrane. Integrin alpha-X/beta-2 is a receptor for fibrinogen. It recognizes the sequence G-P-R in fibrinogen. It mediates cell-cell interaction during inflammatory responses. It is especially important in monocyte adhesion and chemotaxis. The chain is Integrin alpha-X (ITGAX) from Homo sapiens (Human).